Reading from the N-terminus, the 318-residue chain is UDP-3-O-acylglucosamine N-acyltransferase 1 (318 aa).

His230 functions as the Proton acceptor in the catalytic mechanism.

The protein belongs to the transferase hexapeptide repeat family. LpxD subfamily. In terms of assembly, homotrimer.

The catalysed reaction is a UDP-3-O-[(3R)-3-hydroxyacyl]-alpha-D-glucosamine + a (3R)-hydroxyacyl-[ACP] = a UDP-2-N,3-O-bis[(3R)-3-hydroxyacyl]-alpha-D-glucosamine + holo-[ACP] + H(+). The protein operates within bacterial outer membrane biogenesis; LPS lipid A biosynthesis. In terms of biological role, catalyzes the N-acylation of UDP-3-O-acylglucosamine using 3-hydroxyacyl-ACP as the acyl donor. Is involved in the biosynthesis of lipid A, a phosphorylated glycolipid that anchors the lipopolysaccharide to the outer membrane of the cell. This Sulfurimonas denitrificans (strain ATCC 33889 / DSM 1251) (Thiomicrospira denitrificans (strain ATCC 33889 / DSM 1251)) protein is UDP-3-O-acylglucosamine N-acyltransferase 1.